We begin with the raw amino-acid sequence, 536 residues long: Chaperonin GroEL (536 aa).

Residues 30 to 33 (TLGP), 86 to 90 (DGTTT), glycine 414, and aspartate 494 contribute to the ATP site.

This sequence belongs to the chaperonin (HSP60) family. As to quaternary structure, forms a cylinder of 14 subunits composed of two heptameric rings stacked back-to-back. Interacts with the co-chaperonin GroES.

It localises to the cytoplasm. It carries out the reaction ATP + H2O + a folded polypeptide = ADP + phosphate + an unfolded polypeptide.. In terms of biological role, together with its co-chaperonin GroES, plays an essential role in assisting protein folding. The GroEL-GroES system forms a nano-cage that allows encapsulation of the non-native substrate proteins and provides a physical environment optimized to promote and accelerate protein folding. In Methanospirillum hungatei JF-1 (strain ATCC 27890 / DSM 864 / NBRC 100397 / JF-1), this protein is Chaperonin GroEL.